We begin with the raw amino-acid sequence, 196 residues long: Purpurin (196 aa).

A signal peptide spans 1–21 (MKYAQYVFLASIFSAVEYSLA). Disulfide bonds link Cys-24–Cys-182, Cys-90–Cys-196, and Cys-142–Cys-151.

It belongs to the calycin superfamily. Lipocalin family.

Its subcellular location is the secreted. It localises to the extracellular space. It is found in the extracellular matrix. The protein resides in the interphotoreceptor matrix. May be involved in the transport of retinol between the photoreceptors and the pigmented epithelium. The chain is Purpurin from Gallus gallus (Chicken).